Here is a 355-residue protein sequence, read N- to C-terminus: Ornithine transcarbamylase, mitochondrial (355 aa).

A mitochondrion-targeting transit peptide spans Met1 to Lys35. Lys71 carries the post-translational modification N6-acetyllysine; alternate. Lys71 is subject to N6-succinyllysine; alternate. Lys81 is subject to N6-succinyllysine. N6-acetyllysine; alternate is present on Lys89. The residue at position 89 (Lys89) is an N6-succinyllysine; alternate. Residue Ser91 to Arg95 participates in carbamoyl phosphate binding. Ser134 bears the Phosphoserine mark. Arg142 is a carbamoyl phosphate binding site. Residue Arg142 coordinates L-ornithine. Lys145 is modified (N6-acetyllysine; alternate). Lys145 is subject to N6-succinyllysine; alternate. His169 contacts carbamoyl phosphate. An L-ornithine-binding site is contributed by Asn200. N6-acetyllysine; alternate occurs at positions 222, 232, and 239. N6-succinyllysine; alternate occurs at positions 222, 232, and 239. Position 244 is an N6-acetyllysine (Lys244). Residue Asp264–Ser268 coordinates L-ornithine. Residues Lys275 and Lys290 each carry the N6-succinyllysine modification. Lys293 is subject to N6-acetyllysine; alternate. An N6-succinyllysine; alternate modification is found at Lys293. L-ornithine is bound at residue His303–Pro306. Cys304 is an active-site residue. Residue Lys308 is modified to N6-acetyllysine; alternate. N6-succinyllysine; alternate is present on Lys308. Carbamoyl phosphate is bound at residue Arg331. Arg331 contacts L-ornithine.

This sequence belongs to the aspartate/ornithine carbamoyltransferase superfamily. OTCase family. As to quaternary structure, homotrimer. Post-translationally, acetylation at Lys-89 negatively regulates ornithine carbamoyltransferase activity in response to nutrient signals.

It localises to the mitochondrion matrix. It carries out the reaction carbamoyl phosphate + L-ornithine = L-citrulline + phosphate + H(+). Its pathway is nitrogen metabolism; urea cycle; L-citrulline from L-ornithine and carbamoyl phosphate: step 1/1. With respect to regulation, negatively regulated by lysine acetylation. Functionally, catalyzes the second step of the urea cycle, the condensation of carbamoyl phosphate with L-ornithine to form L-citrulline. The urea cycle ensures the detoxification of ammonia by converting it to urea for excretion. This chain is Ornithine transcarbamylase, mitochondrial, found in Ovis aries (Sheep).